The sequence spans 284 residues: uncharacterized protein (284 aa).

Belongs to the IIV-6 436R family.

This is an uncharacterized protein from Invertebrate iridescent virus 3 (IIV-3).